Consider the following 239-residue polypeptide: Ribonuclease 3 (239 aa).

An RNase III domain is found at 18–141 (YTTLEKALGY…LMAGVYLEAG (124 aa)). Glutamate 54 is a binding site for Mg(2+). Aspartate 58 is an active-site residue. Mg(2+) contacts are provided by serine 127 and glutamate 130. Glutamate 130 is an active-site residue. Residues 168–237 (DYKTALQELT…AYQALQKLKE (70 aa)) enclose the DRBM domain.

It belongs to the ribonuclease III family. In terms of assembly, homodimer. Mg(2+) serves as cofactor.

It is found in the cytoplasm. It catalyses the reaction Endonucleolytic cleavage to 5'-phosphomonoester.. Digests double-stranded RNA. Involved in the processing of primary rRNA transcript to yield the immediate precursors to the large and small rRNAs (23S and 16S). Processes some mRNAs, and tRNAs when they are encoded in the rRNA operon. Processes pre-crRNA and tracrRNA of type II CRISPR loci if present in the organism. The polypeptide is Ribonuclease 3 (Helicobacter pylori (strain ATCC 700392 / 26695) (Campylobacter pylori)).